The sequence spans 284 residues: Nucleotide-binding protein Sden_0486 (284 aa).

8 to 15 (GRSGSGKS) is an ATP binding site. A GTP-binding site is contributed by 56–59 (DVRN).

Belongs to the RapZ-like family.

Functionally, displays ATPase and GTPase activities. This Shewanella denitrificans (strain OS217 / ATCC BAA-1090 / DSM 15013) protein is Nucleotide-binding protein Sden_0486.